The sequence spans 440 residues: Serine/threonine-protein kinase VRK1 (440 aa).

A Protein kinase domain is found at 37–317 (WKLGLPIGQG…LLEYTEKPLY (281 aa)). ATP contacts are provided by residues 43 to 51 (IGQGGFGCI) and lysine 71. Residue lysine 71 forms a Glycyl lysine isopeptide (Lys-Gly) (interchain with G-Cter in SUMO2) linkage. Aspartate 177 (proton acceptor) is an active-site residue. Serine 342 is subject to Phosphoserine; by PLK3. Serine 376 is subject to Phosphoserine. Position 378 is a phosphothreonine (threonine 378). Composition is skewed to polar residues over residues 379–391 (QVQE…SVES) and 398–410 (SMSQ…SSSD). The tract at residues 379–440 (QVQEAAQTRS…GSRTRKKAQK (62 aa)) is disordered. The tract at residues 387–393 (RSVESQG) is required for interaction with the nucleosome.

This sequence belongs to the protein kinase superfamily. CK1 Ser/Thr protein kinase family. VRK subfamily. As to quaternary structure, interacts with HDAC1, KAT2B, SETDB1, KDM3A and KDM4A. Associates with the nucleosome through interactions with nucleosome DNA, histone H2A and histone H2B; the interaction with H2A and H2B is mediated by the nucleosome acidic patch, a cluster of negatively charged residues of H2A and H2B forming a cleft within the nucleosome core. Post-translationally, autophosphorylated at various serine and threonine residues. Autophosphorylation does not impair its ability to phosphorylate p53/TP53. Phosphorylation by PLK3 leads to induction of Golgi fragmentation during mitosis. Highly expressed in testis. Expressed in liver, kidney and muscle. Weakly expressed in thymus, bone marrow and spleen.

The protein resides in the nucleus. It is found in the cytoplasm. It localises to the cajal body. The catalysed reaction is L-seryl-[protein] + ATP = O-phospho-L-seryl-[protein] + ADP + H(+). It carries out the reaction L-threonyl-[protein] + ATP = O-phospho-L-threonyl-[protein] + ADP + H(+). Active in presence of Mn(2+), Mg(2+) and Zn(2+), but is not functional with Ca(2+) or Cu(2+). Has a higher affinity for Mn(2+) than for Mg(2+). RAN inhibits its autophosphorylation and its ability to phosphorylate histone H3. In terms of biological role, serine/threonine kinase involved in the regulation of key cellular processes including the cell cycle, nuclear condensation, transcription regulation, and DNA damage response. Controls chromatin organization and remodeling by mediating phosphorylation of histone H3 on 'Thr-4' and histone H2AX (H2aXT4ph). It also phosphorylates KAT5 in response to DNA damage, promoting KAT5 association with chromatin and histone acetyltransferase activity. Is involved in the regulation of cell cycle progression of neural progenitors, and is required for proper cortical neuronal migration. Is involved in neurite elongation and branching in motor neurons, and has an essential role in Cajal bodies assembly, acting through COIL phosphorylation and the control of coilin degradation. Involved in Golgi disassembly during the cell cycle: following phosphorylation by PLK3 during mitosis, required to induce Golgi fragmentation. Phosphorylates BANF1: disrupts its ability to bind DNA, reduces its binding to LEM domain-containing proteins and causes its relocalization from the nucleus to the cytoplasm. Phosphorylates TP53BP1 and p53/TP53 on 'Thr-18', preventing the interaction between p53/TP53 and MDM2. Phosphorylates ATF2 which activates its transcriptional activity. Phosphorylates JUN. The polypeptide is Serine/threonine-protein kinase VRK1 (Mus musculus (Mouse)).